We begin with the raw amino-acid sequence, 3677 residues long: Dystrophin (3677 aa).

The actin-binding stretch occupies residues 1–240 (MLWWEEVEDC…YITSLFQVLP (240 aa)). Calponin-homology (CH) domains are found at residues 15-119 (DVQK…LHWQ) and 134-240 (TNSE…QVLP). An ANK2- and ANK-3 binding region spans residues 63–72 (PKEKGSTRVH). 23 Spectrin repeats span residues 342 to 447 (LDSY…SNLH), 451 to 557 (MDLQ…LLQD), 560 to 668 (LKWQ…QISQ), 728 to 828 (DITE…NWLE), 831 to 935 (NNII…ELQT), 944 to 1046 (RYQE…KLEE), 1049 to 1154 (NKLR…EALK), 1163 to 1264 (LQKD…TLEE), 1268 to 1464 (CWHE…LFQK), 1469 to 1569 (EQRL…QLEK), 1573 to 1676 (LSRK…NLLL), 1680 to 1777 (KHME…TGKA), 1779 to 1875 (IPLK…KALE), 1878 to 1980 (HQWY…TLHE), 2001 to 2098 (YLTE…ERQG), 2106 to 2209 (KWRH…RVEE), 2215 to 2316 (SEFQ…GELE), 2317 to 2415 (VHIK…LRTK), 2465 to 2569 (ADFN…QLNE), 2576 to 2678 (QWLE…ALEE), 2682 to 2786 (LLQQ…KKSL), 2800 to 2922 (KRLH…RKID), and 2927 to 3032 (RLQE…QLHE). Positions 1416–1914 (SDLTSHEISL…PEPRDERKIK (499 aa)) are interaction with SYNM. One can recognise a WW domain in the interval 3047–3080 (TSVQGPWERAISPNKVPYYINHETQTTCWDHPKM). The segment at 3050-3400 (QGPWERAISP…TVLEGDNMET (351 aa)) is interaction with SYNM. The ZZ-type; degenerate zinc-finger motif lies at 3300-3356 (KHQAKCNICKECPIIGFRYRSLKHFNYDICQSCFFSGRVAKGHKMHYPMVEYCTPTT). Zn(2+)-binding residues include C3305, C3308, C3329, and C3332. The tract at residues 3458-3510 (DDEHLLIQHYCQSLNQDSPLSQPRSPAQILISLESEERGELERILADLEEENR) is binds to SNTB1. Phosphoserine is present on residues S3475, S3482, and S3492. Disordered stretches follow at residues 3520-3546 (KQQHEHKGLSPLPSPPEMMPTSPQSPR) and 3595-3677 (EAKV…EDTM). 2 stretches are compositionally biased toward polar residues: residues 3599-3618 (NGTTVSSPSTSLQRSDSSQP) and 3654-3664 (QLNNSFPSSRG). 6 positions are modified to phosphoserine: S3604, S3605, S3609, S3615, S3616, and S3658.

In terms of assembly, interacts with SYNM. Interacts with the syntrophins SNTG1 and SNTG2. Interacts with KRT19. Component of the dystrophin-associated glycoprotein complex which is composed of three subcomplexes: a cytoplasmic complex comprised of DMD (or UTRN), DTNA and a number of syntrophins, such as SNTB1, SNTB2, SNTG1 and SNTG2, the transmembrane dystroglycan complex, and the sarcoglycan-sarcospan complex. Interacts with DAG1 (betaDAG1) with DMD; the interaction is inhibited by phosphorylation on the PPXY motif of DAG1. Interacts with SYNM; SNTA1 and SNTB1. Interacts with CMYA5. Directly interacts with ANK2 and ANK3; these interactions do not interfere with betaDAG1-binding and are necessary for proper localization in muscle cells. Identified in a dystroglycan complex that contains at least PRX, DRP2, UTRN, DMD and DAG1. Interacts with DTNB. Interacts with PGM5; the interaction is direct. Interacts with NOS1; localizes NOS1 to sarcolemma in muscle cells. In terms of tissue distribution, strongly expressed in skeletal muscle and weak expression observed in newborn brain which increases in adult brain.

The protein resides in the cell membrane. The protein localises to the sarcolemma. Its subcellular location is the cytoplasm. It localises to the cytoskeleton. It is found in the postsynaptic cell membrane. Functionally, anchors the extracellular matrix to the cytoskeleton via F-actin. Ligand for dystroglycan. Component of the dystrophin-associated glycoprotein complex which accumulates at the neuromuscular junction (NMJ) and at a variety of synapses in the peripheral and central nervous systems and has a structural function in stabilizing the sarcolemma. Also implicated in signaling events and synaptic transmission. The protein is Dystrophin (Dmd) of Rattus norvegicus (Rat).